The sequence spans 190 residues: Probable chemoreceptor glutamine deamidase CheD (190 aa).

The protein belongs to the CheD family.

The catalysed reaction is L-glutaminyl-[protein] + H2O = L-glutamyl-[protein] + NH4(+). Its function is as follows. Probably deamidates glutamine residues to glutamate on methyl-accepting chemotaxis receptors (MCPs), playing an important role in chemotaxis. The sequence is that of Probable chemoreceptor glutamine deamidase CheD from Acidiphilium cryptum (strain JF-5).